The primary structure comprises 166 residues: Ribosomal RNA large subunit methyltransferase H (166 aa).

S-adenosyl-L-methionine is bound by residues Leu-85, Gly-116, and 135-140 (ISKMTF).

The protein belongs to the RNA methyltransferase RlmH family. In terms of assembly, homodimer.

It is found in the cytoplasm. It carries out the reaction pseudouridine(1915) in 23S rRNA + S-adenosyl-L-methionine = N(3)-methylpseudouridine(1915) in 23S rRNA + S-adenosyl-L-homocysteine + H(+). Specifically methylates the pseudouridine at position 1915 (m3Psi1915) in 23S rRNA. The polypeptide is Ribosomal RNA large subunit methyltransferase H (Francisella tularensis subsp. holarctica (strain FTNF002-00 / FTA)).